The sequence spans 886 residues: Valine--tRNA ligase (886 aa).

Residues Pro43–His53 carry the 'HIGH' region motif. Positions Lys528–Ser532 match the 'KMSKS' region motif. Lys531 is a binding site for ATP.

This sequence belongs to the class-I aminoacyl-tRNA synthetase family. ValS type 2 subfamily.

Its subcellular location is the cytoplasm. It catalyses the reaction tRNA(Val) + L-valine + ATP = L-valyl-tRNA(Val) + AMP + diphosphate. Its function is as follows. Catalyzes the attachment of valine to tRNA(Val). As ValRS can inadvertently accommodate and process structurally similar amino acids such as threonine, to avoid such errors, it has a 'posttransfer' editing activity that hydrolyzes mischarged Thr-tRNA(Val) in a tRNA-dependent manner. This chain is Valine--tRNA ligase, found in Methanococcus maripaludis (strain DSM 14266 / JCM 13030 / NBRC 101832 / S2 / LL).